Reading from the N-terminus, the 443-residue chain is Trigger factor (443 aa).

A PPIase FKBP-type domain is found at glycine 161–proline 246.

The protein belongs to the FKBP-type PPIase family. Tig subfamily.

The protein resides in the cytoplasm. It carries out the reaction [protein]-peptidylproline (omega=180) = [protein]-peptidylproline (omega=0). In terms of biological role, involved in protein export. Acts as a chaperone by maintaining the newly synthesized protein in an open conformation. Functions as a peptidyl-prolyl cis-trans isomerase. The sequence is that of Trigger factor from Legionella pneumophila subsp. pneumophila (strain Philadelphia 1 / ATCC 33152 / DSM 7513).